The primary structure comprises 553 residues: Chaperonin GroEL (553 aa).

Residues 30–33 (TLGP), K51, 87–91 (DGTTT), G416, and D496 contribute to the ATP site.

This sequence belongs to the chaperonin (HSP60) family. Forms a cylinder of 14 subunits composed of two heptameric rings stacked back-to-back. Interacts with the co-chaperonin GroES.

The protein resides in the cytoplasm. It carries out the reaction ATP + H2O + a folded polypeptide = ADP + phosphate + an unfolded polypeptide.. In terms of biological role, together with its co-chaperonin GroES, plays an essential role in assisting protein folding. The GroEL-GroES system forms a nano-cage that allows encapsulation of the non-native substrate proteins and provides a physical environment optimized to promote and accelerate protein folding. This Alkalilimnicola ehrlichii (strain ATCC BAA-1101 / DSM 17681 / MLHE-1) protein is Chaperonin GroEL.